The following is a 380-amino-acid chain: Chromo domain-containing protein 2 (380 aa).

Disordered regions lie at residues 14–58 (ISES…SLYG) and 100–156 (KLSP…VPLN). A compositionally biased stretch (polar residues) spans 33–52 (NSINNKSSTASLESPQNGSW). The segment covering 108-119 (EDSEDKKEEDES) has biased composition (acidic residues). Positions 121–140 (SYKNEFKSSSSASVSSNFEK) are enriched in low complexity. Residues 176-238 (FAVEMILDSR…SRGGKPDLSS (63 aa)) form the Chromo domain. The interval 250 to 273 (SNEASYVEKDESSNSDDSISYKRR) is disordered.

It localises to the nucleus. In terms of biological role, component of the kinetochore which plays a role in stabilizing microtubules and so allowing accurate chromosome segregation. The sequence is that of Chromo domain-containing protein 2 (chp2) from Schizosaccharomyces pombe (strain 972 / ATCC 24843) (Fission yeast).